Consider the following 133-residue polypeptide: Classical arabinogalactan protein 5 (133 aa).

The N-terminal stretch at 1–21 (MASKSVVVFLFLALVASSVVA) is a signal peptide. The residue at position 22 (Q22) is a Pyrrolidone carboxylic acid. Positions 23–110 (APGPAPTISP…QSPLSGSPNA (88 aa)) are disordered. The span at 25–37 (GPAPTISPLPATP) shows a compositional bias: pro residues. Positions 38 to 48 (TPSQSPRATAP) are enriched in low complexity. Over residues 49–81 (APSPSANPPPSAPTTAPPVSQPPTESPPAPPTS) the composition is skewed to pro residues. Residue N109 is the site of GPI-anchor amidated asparagine attachment. A propeptide spans 110–133 (AAAVSRVSLVGTFAGVAVIAALLL) (removed in mature form).

Belongs to the classical AGP family. O-glycosylated on the hydroxyproline residues. In terms of tissue distribution, expressed at a low level in flowers and siliques.

The protein localises to the cell membrane. Proteoglycan that seems to be implicated in diverse developmental roles such as differentiation, cell-cell recognition, embryogenesis and programmed cell death. This chain is Classical arabinogalactan protein 5 (AGP5), found in Arabidopsis thaliana (Mouse-ear cress).